The primary structure comprises 176 residues: ATP-dependent protease subunit HslV (176 aa).

T6 is a catalytic residue. Residues S161, C164, and T167 each coordinate Na(+).

The protein belongs to the peptidase T1B family. HslV subfamily. In terms of assembly, a double ring-shaped homohexamer of HslV is capped on each side by a ring-shaped HslU homohexamer. The assembly of the HslU/HslV complex is dependent on binding of ATP.

The protein resides in the cytoplasm. The enzyme catalyses ATP-dependent cleavage of peptide bonds with broad specificity.. With respect to regulation, allosterically activated by HslU binding. Protease subunit of a proteasome-like degradation complex believed to be a general protein degrading machinery. The protein is ATP-dependent protease subunit HslV of Pseudothermotoga lettingae (strain ATCC BAA-301 / DSM 14385 / NBRC 107922 / TMO) (Thermotoga lettingae).